The sequence spans 245 residues: tRNA1(Val) (adenine(37)-N6)-methyltransferase (245 aa).

The protein belongs to the methyltransferase superfamily. tRNA (adenine-N(6)-)-methyltransferase family.

It localises to the cytoplasm. The enzyme catalyses adenosine(37) in tRNA1(Val) + S-adenosyl-L-methionine = N(6)-methyladenosine(37) in tRNA1(Val) + S-adenosyl-L-homocysteine + H(+). Its function is as follows. Specifically methylates the adenine in position 37 of tRNA(1)(Val) (anticodon cmo5UAC). In Citrobacter koseri (strain ATCC BAA-895 / CDC 4225-83 / SGSC4696), this protein is tRNA1(Val) (adenine(37)-N6)-methyltransferase.